The following is a 744-amino-acid chain: Palmitoyltransferase ZDHHC5-A (744 aa).

A compositionally biased stretch (gly residues) spans 1 to 11 (MPSGSMSGGVS). Residues 1–25 (MPSGSMSGGVSGPTSPPHPTVPSRP) are disordered. At 1–30 (MPSGSMSGGVSGPTSPPHPTVPSRPLRPSR) the chain is on the cytoplasmic side. A helical transmembrane segment spans residues 31–51 (YVPVSAATAFLVGSTTLFFCF). Residues 52–61 (TCPWLSEQFS) lie on the Extracellular side of the membrane. Residues 62-82 (VAVPIYNGVMFMFVLANFCMA) traverse the membrane as a helical segment. The Cytoplasmic portion of the chain corresponds to 83 to 167 (TFMDPGIFPR…IGRRNYRYFF (85 aa)). A DHHC domain is found at 121–171 (KWCSTCRFYRPPRCSHCSVCDNCVEDFDHHCPWVNNCIGRRNYRYFFLFLL). Cys151 acts as the S-palmitoyl cysteine intermediate in catalysis. Residues 168–188 (LFLLSLTAHIMGVFGFGLLFI) form a helical membrane-spanning segment. The Extracellular segment spans residues 189–208 (LYHTQQLDRVHSAVTMAVMC). A helical transmembrane segment spans residues 209 to 229 (VAGLFFIPVAGLTGFHVVLVA). Over 230–744 (RGRTTNEQVT…VGGTTYEISV (515 aa)) the chain is Cytoplasmic. Disordered stretches follow at residues 314–523 (SLEM…PVVG), 556–645 (QHAV…SLSY), and 664–744 (SVAG…EISV). Residues 369–393 (TYSSPGKNHTALTHAYANQSSQQPG) are compositionally biased toward polar residues. The segment covering 398-413 (PSLDGREGGGAERSGA) has biased composition (basic and acidic residues). A compositionally biased stretch (gly residues) spans 415 to 428 (RTGGGPGGPPGSGI). The span at 460-501 (THNAPPSEATTSTSYKSLANQTPPQAARNGSLSYDSLLTPSE) shows a compositional bias: polar residues. Positions 571–584 (PERERERLLHDSQA) are enriched in basic and acidic residues. Positions 585–601 (QHHHHHHHHHHHHRPPR) are enriched in basic residues. Composition is skewed to low complexity over residues 621–630 (RTRSTDTTHP) and 689–723 (PKPSSTPSSPTHPISVSTRPGQAHSSAGSSQSPAH). Positions 725–737 (PGGGVKKVTGVGG) are enriched in gly residues.

This sequence belongs to the DHHC palmitoyltransferase family. ERF2/ZDHHC9 subfamily.

Its subcellular location is the cell membrane. The catalysed reaction is L-cysteinyl-[protein] + hexadecanoyl-CoA = S-hexadecanoyl-L-cysteinyl-[protein] + CoA. In terms of biological role, palmitoyltransferase that catalyzes the addition of palmitate onto various protein substrates and is involved in a variety of cellular processes. The polypeptide is Palmitoyltransferase ZDHHC5-A (Danio rerio (Zebrafish)).